We begin with the raw amino-acid sequence, 346 residues long: MVTGNTKAETFYSMKELLKETGGYAIIDGGLATELERHGADLNDPLWSAKCLLTSPHLIHTVHLDYLEAGADIISSASYQATIQGFEAKGYSIEKSESLLRKSVEIACEARSTYYDKCKDDDDKKILKKRPILVAASVGSYGAFLADGSEYSGIYGDLITLETLKDFHRRRVQVLAESGADIIAFETIPNKLEAQAFAELLDEGVAKIPGWFSFNSKDGVNVVSGDSIKECIAIAEACEKVVAVGINCTPPRFIEGLVLEIAKVTSKPILVYPNSGERYDPERKEWVENTGVGNEDFVSYVEKWMDAGVSLLGGCCRTTPTTIRAIHKRLVSRRSLFSSSSSSSHH.

In terms of domain architecture, Hcy-binding spans 13–330 (SMKELLKETG…TTIRAIHKRL (318 aa)). Residues cysteine 248, cysteine 315, and cysteine 316 each coordinate Zn(2+).

Zn(2+) is required as a cofactor. As to expression, expressed in roots, young leaves and florets, but not detected in plants not exposed to selenium.

The enzyme catalyses S-methyl-L-methionine + L-selenocysteine = Se-methyl-L-selenocysteine + L-methionine + H(+). Its activity is regulated as follows. Inhibited by L-methionine. Catalyzes the methylation of DL- and L-selenocysteine with S-methylmethionine as donor. Also methylates DL-homocysteine, DL- and L-cysteine in vitro. May be involved in selenium detoxification. This chain is Selenocysteine Se-methyltransferase (SMT), found in Brassica oleracea var. italica (Broccoli).